We begin with the raw amino-acid sequence, 521 residues long: Circadian clock oscillator protein KaiC (521 aa).

KaiC domains follow at residues 1-248 and 262-521; these read MNEP…INIF and ARIS…LDEE. Residues glycine 50, threonine 51, glycine 52, lysine 53, threonine 54, leucine 55, serine 90, lysine 225, leucine 226, arginine 227, threonine 229, histidine 231, threonine 241, threonine 291, glycine 292, threonine 293, glycine 294, lysine 295, threonine 296, and leucine 297 each contribute to the ATP site. Threonine 54 provides a ligand contact to Mg(2+). Threonine 296 provides a ligand contact to Mg(2+). A Mg(2+)-binding site is contributed by glutamate 319. Residue tryptophan 332 coordinates ATP. Phosphoserine; by autocatalysis is present on serine 432. At threonine 433 the chain carries Phosphothreonine; by autocatalysis. ATP-binding residues include arginine 452, lysine 458, methionine 459, arginine 460, serine 462, histidine 464, and lysine 466.

The protein belongs to the KaiC family. As to quaternary structure, homohexamer; hexamerization is dependent on ATP-binding. The KaiABC complex composition changes during the circadian cycle to control KaiC phosphorylation. Complexes KaiC(6), KaiA(2-4):KaiC(6), KaiB(6):KaiC(6) and KaiC(6):KaiB(6):KaiA(12) are among the most important forms, many form cooperatively. KaiC interacts with SasA, activating its autokinase function and leading to RpaA activation. Mg(2+) is required as a cofactor. Phosphorylated on serine and threonine residues by autocatalysis. Has a 4 step phosphorylation cycle; the autokinase acts first on Thr-433, then Ser-432. When Ser-432 is modified KaiC switches to an autophosphatase mode, acting first on phospho-Thr-433 then phospho-Ser-432.

It catalyses the reaction L-seryl-[protein] + ATP = O-phospho-L-seryl-[protein] + ADP + H(+). It carries out the reaction L-threonyl-[protein] + ATP = O-phospho-L-threonyl-[protein] + ADP + H(+). The catalysed reaction is ATP + H2O = ADP + phosphate + H(+). Its activity is regulated as follows. The interaction with KaiA enhances its phosphorylation status, while the interaction with KaiB decreases it. Functionally, central component of the KaiABC oscillator complex, which constitutes the main circadian regulator in cyanobacteria. Complex composition changes during the circadian cycle to control KaiC phosphorylation. KaiA stimulates KaiC autophosphorylation, while KaiB sequesters KaiA, leading to KaiC autodephosphorylation. Clock output pathways impact the RpaA transcriptional regulator. KaiC enhances the autophosphorylation activity of SasA, which then transfers its phosphate group to RpaA to activate it. KaiB and KaiC together enhance the phospho-RpaA dephosphatase activity of CikA. In terms of biological role, has a weak, temperature-independent ATPase activity; ATPase activity defines the circadian period. The phosphorylation state of KaiC modulates its ATPase activity and effects KaiB binding. The polypeptide is Circadian clock oscillator protein KaiC (Rippkaea orientalis (strain PCC 8801 / RF-1) (Cyanothece sp. (strain PCC 8801))).